The following is a 264-amino-acid chain: 5'-nucleotidase SurE (264 aa).

Residues Asp10, Asp11, Ser43, and Asn97 each contribute to the a divalent metal cation site.

This sequence belongs to the SurE nucleotidase family. A divalent metal cation is required as a cofactor.

The protein resides in the cytoplasm. The catalysed reaction is a ribonucleoside 5'-phosphate + H2O = a ribonucleoside + phosphate. Its function is as follows. Nucleotidase that shows phosphatase activity on nucleoside 5'-monophosphates. In Sulfurimonas denitrificans (strain ATCC 33889 / DSM 1251) (Thiomicrospira denitrificans (strain ATCC 33889 / DSM 1251)), this protein is 5'-nucleotidase SurE.